The primary structure comprises 1482 residues: Chromosome partition protein MukB (1482 aa).

34 to 41 lines the ATP pocket; the sequence is GGNGAGKS. Coiled coils occupy residues 326–472, 507–602, 780–805, 832–1110, and 1209–1265; these read LEAD…QTAH, NQRH…RRAP, RAARENRIETLHAERESLSERFATLS, DDPE…REQV, and VEAI…LQSV. Residues 666–783 are flexible hinge; sequence PGGSEDPRLN…SLPLFGRAAR (118 aa).

It belongs to the SMC family. MukB subfamily. Homodimerization via its hinge domain. Binds to DNA via its C-terminal region. Interacts, and probably forms a ternary complex, with MukE and MukF via its C-terminal region. The complex formation is stimulated by calcium or magnesium. Interacts with tubulin-related protein FtsZ.

It localises to the cytoplasm. The protein resides in the nucleoid. Its function is as follows. Plays a central role in chromosome condensation, segregation and cell cycle progression. Functions as a homodimer, which is essential for chromosome partition. Involved in negative DNA supercoiling in vivo, and by this means organize and compact chromosomes. May achieve or facilitate chromosome segregation by condensation DNA from both sides of a centrally located replisome during cell division. In Klebsiella pneumoniae subsp. pneumoniae (strain ATCC 700721 / MGH 78578), this protein is Chromosome partition protein MukB.